The following is a 99-amino-acid chain: MEIKILERKDNLVEIELINEDHSLPNLLKDILLTKEGVKMASYSIDHPLLHPETGRYISNPKITIITEEGTDPLEVLKEGLRDIIKMCDTLLDELKEKK.

The protein belongs to the archaeal Rpo11/eukaryotic RPB11/RPC19 RNA polymerase subunit family. As to quaternary structure, part of the RNA polymerase complex. Forms an Rpo3-Rpo10-Rpo11-Rpo12 complex upon coexpression.

Its subcellular location is the cytoplasm. It carries out the reaction RNA(n) + a ribonucleoside 5'-triphosphate = RNA(n+1) + diphosphate. DNA-dependent RNA polymerase (RNAP) catalyzes the transcription of DNA into RNA using the four ribonucleoside triphosphates as substrates. In Methanocaldococcus jannaschii (strain ATCC 43067 / DSM 2661 / JAL-1 / JCM 10045 / NBRC 100440) (Methanococcus jannaschii), this protein is DNA-directed RNA polymerase subunit Rpo11.